A 344-amino-acid polypeptide reads, in one-letter code: Methionine import ATP-binding protein MetN (344 aa).

The region spanning 2–241 is the ABC transporter domain; it reads IELQGLSQRF…PQHEVTRAMI (240 aa). An ATP-binding site is contributed by 38-45; that stretch reads GRSGAGKS.

Belongs to the ABC transporter superfamily. Methionine importer (TC 3.A.1.24) family. As to quaternary structure, the complex is composed of two ATP-binding proteins (MetN), two transmembrane proteins (MetI) and a solute-binding protein (MetQ).

It is found in the cell inner membrane. The enzyme catalyses L-methionine(out) + ATP + H2O = L-methionine(in) + ADP + phosphate + H(+). It catalyses the reaction D-methionine(out) + ATP + H2O = D-methionine(in) + ADP + phosphate + H(+). In terms of biological role, part of the ABC transporter complex MetNIQ involved in methionine import. Responsible for energy coupling to the transport system. The sequence is that of Methionine import ATP-binding protein MetN from Cupriavidus metallidurans (strain ATCC 43123 / DSM 2839 / NBRC 102507 / CH34) (Ralstonia metallidurans).